We begin with the raw amino-acid sequence, 553 residues long: Terpene synthase 16 (553 aa).

Residues Asp-303, Asp-307, and Glu-457 each coordinate Mg(2+). The DDXXD motif motif lies at Asp-303–Asp-307.

It belongs to the terpene synthase family. Tpsa subfamily. Requires Mg(2+) as cofactor. It depends on Mn(2+) as a cofactor. As to expression, expressed in leaves, trichomes and flowers.

The protein operates within secondary metabolite biosynthesis; terpenoid biosynthesis. In terms of biological role, sesquiterpene synthase involved in the biosynthesis of volatile compounds. No activity detected with geranyl diphosphate (GPP) and farnesyl diphosphate (FPP) as substrates. The sequence is that of Terpene synthase 16 from Solanum lycopersicum (Tomato).